The primary structure comprises 106 residues: Large ribosomal subunit protein bL21 (106 aa).

Belongs to the bacterial ribosomal protein bL21 family. In terms of assembly, part of the 50S ribosomal subunit. Contacts protein L20.

This protein binds to 23S rRNA in the presence of protein L20. The sequence is that of Large ribosomal subunit protein bL21 from Thermosipho africanus (strain TCF52B).